The sequence spans 259 residues: tRNA (guanine-N(7)-)-methyltransferase (259 aa).

Residues Gly-80, 103–104, 136–137, and Leu-156 each bind S-adenosyl-L-methionine; these read EL and NS. Asp-159 is an active-site residue. Residue 234-236 coordinates S-adenosyl-L-methionine; that stretch reads TEE.

This sequence belongs to the class I-like SAM-binding methyltransferase superfamily. TrmB family.

It localises to the nucleus. The catalysed reaction is guanosine(46) in tRNA + S-adenosyl-L-methionine = N(7)-methylguanosine(46) in tRNA + S-adenosyl-L-homocysteine. It participates in tRNA modification; N(7)-methylguanine-tRNA biosynthesis. In terms of biological role, catalyzes the formation of N(7)-methylguanine at position 46 (m7G46) in tRNA. The chain is tRNA (guanine-N(7)-)-methyltransferase from Oryza sativa subsp. indica (Rice).